Consider the following 486-residue polypeptide: NADH-quinone oxidoreductase subunit N (486 aa).

14 helical membrane passes run 11-31 (ALPE…DLFV), 44-64 (MLAL…YPVL), 74-94 (PIAS…MIYA), 103-123 (FLKG…CVMV), 128-148 (MLTL…LIAL), 163-183 (FVLG…VYGG), 206-226 (VSLG…AVPF), 238-258 (PTAV…VFVI), 267-287 (PAAV…LVVG), 300-320 (MLAY…LAAT), 328-348 (MFYA…LLAL), 371-391 (YALL…LVGF), 404-424 (VGLT…AFYY), and 452-472 (LVLG…NGLY).

It belongs to the complex I subunit 2 family. In terms of assembly, NDH-1 is composed of 14 different subunits. Subunits NuoA, H, J, K, L, M, N constitute the membrane sector of the complex.

Its subcellular location is the cell inner membrane. The enzyme catalyses a quinone + NADH + 5 H(+)(in) = a quinol + NAD(+) + 4 H(+)(out). In terms of biological role, NDH-1 shuttles electrons from NADH, via FMN and iron-sulfur (Fe-S) centers, to quinones in the respiratory chain. The immediate electron acceptor for the enzyme in this species is believed to be ubiquinone. Couples the redox reaction to proton translocation (for every two electrons transferred, four hydrogen ions are translocated across the cytoplasmic membrane), and thus conserves the redox energy in a proton gradient. This is NADH-quinone oxidoreductase subunit N from Laribacter hongkongensis (strain HLHK9).